The chain runs to 497 residues: MYSRCIALVFVGLLASSLAANCYGPAGKLAVAEFDAFPSPVAVGGTVYIRTNIQPTYDMGSATVQLSVYYSDNFDVTGLKPVVDIPGLQLCNLSTSITCPITAGTHILAWEYRVPDVLPGTYQVKYTILEDNPPDGNPYSCIQFSITVEGQKTNEFTSWYQATLLGTALFTQPDYKLRQIGEALQVGPSGPLNGSISPVPYNGSIKYLSGSGDLVPNAFYDTSNFVWGLSGTMVKQTIGALGQISHIYQGECYLGYINNINTSIAGNFYDYMTPLIDGTFTLNWTYTDSSTAEINGVAQFQPAATIPYGWGFPLLYGRLGEHQVVTSDVGFLMIKGNMPFCTSGVCAAPPAQGGSKHHGLSSQKLGLAIGLPIAGVFLIILIAAAIIYYRKRRESEKEDGVFAVSRKPEYGSALVVDGIIEETMGSKTMQAMLDMRDDDESEHDSDDGYGRSGQSGRSGRSRSRSRSRSVSRSRSGSRDARSESDPGESASRDSDSD.

A signal peptide spans M1–A19. The Extracellular portion of the chain corresponds to A20–G366. 5 N-linked (GlcNAc...) asparagine glycosylation sites follow: N92, N193, N202, N261, and N283. A helical membrane pass occupies residues L367 to I387. At Y388–D497 the chain is on the cytoplasmic side. Residues M424–G450 are necessary for phosphorylation by PSRPK in vitro. Residues R436–D447 show a composition bias toward acidic residues. Positions R436–D497 are disordered. Basic residues predominate over residues G459–S471. Over residues G476 to D497 the composition is skewed to basic and acidic residues.

Phosphorylated on serine residues in the RS domain by PSRPK.

The protein resides in the membrane. The chain is Serine/arginine-rich protein PSR from Physarum polycephalum (Slime mold).